Here is a 248-residue protein sequence, read N- to C-terminus: 2,3-bisphosphoglycerate-dependent phosphoglycerate mutase (248 aa).

Residues 8 to 15, 21 to 22, Arg-60, 87 to 90, Lys-98, 114 to 115, and 183 to 184 each bind substrate; these read RHGESLWN, TG, EKHY, RR, and GN. The active-site Tele-phosphohistidine intermediate is the His-9. The active-site Proton donor/acceptor is Glu-87.

Belongs to the phosphoglycerate mutase family. BPG-dependent PGAM subfamily.

The enzyme catalyses (2R)-2-phosphoglycerate = (2R)-3-phosphoglycerate. Its pathway is carbohydrate degradation; glycolysis; pyruvate from D-glyceraldehyde 3-phosphate: step 3/5. Its function is as follows. Catalyzes the interconversion of 2-phosphoglycerate and 3-phosphoglycerate. This is 2,3-bisphosphoglycerate-dependent phosphoglycerate mutase from Porphyromonas gingivalis (strain ATCC 33277 / DSM 20709 / CIP 103683 / JCM 12257 / NCTC 11834 / 2561).